Here is an 843-residue protein sequence, read N- to C-terminus: Protein P (843 aa).

The interval 1-177 (MPLSYPHFRK…FCGSPYSWEQ (177 aa)) is terminal protein domain (TP). A spacer region spans residues 178 to 346 (ELQHGSTSIN…YCLSHIINLL (169 aa)). 2 disordered regions span residues 202–221 (SGIL…FQQS) and 285–310 (TNPS…VPPG). A polymerase/reverse transcriptase domain (RT) region spans residues 347–690 (EDWGPCYEHG…YMNLYPVARQ (344 aa)). A Reverse transcriptase domain is found at 357–600 (QHHIRTPRTP…YTLNFMGYVI (244 aa)). The Mg(2+) site is built by Asp-429, Asp-551, and Asp-552.

It belongs to the hepadnaviridae P protein family.

The enzyme catalyses DNA(n) + a 2'-deoxyribonucleoside 5'-triphosphate = DNA(n+1) + diphosphate. It carries out the reaction Endonucleolytic cleavage to 5'-phosphomonoester.. With respect to regulation, activated by host HSP70 and HSP40 in vitro to be able to bind the epsilon loop of the pgRNA. Because deletion of the RNase H region renders the protein partly chaperone-independent, the chaperones may be needed indirectly to relieve occlusion of the RNA-binding site by this domain. Inhibited by several reverse-transcriptase inhibitors: Lamivudine, Adefovir and Entecavir. Its function is as follows. Multifunctional enzyme that converts the viral RNA genome into dsDNA in viral cytoplasmic capsids. This enzyme displays a DNA polymerase activity that can copy either DNA or RNA templates, and a ribonuclease H (RNase H) activity that cleaves the RNA strand of RNA-DNA heteroduplexes in a partially processive 3'- to 5'-endonucleasic mode. Neo-synthesized pregenomic RNA (pgRNA) are encapsidated together with the P protein, and reverse-transcribed inside the nucleocapsid. Initiation of reverse-transcription occurs first by binding the epsilon loop on the pgRNA genome, and is initiated by protein priming, thereby the 5'-end of (-)DNA is covalently linked to P protein. Partial (+)DNA is synthesized from the (-)DNA template and generates the relaxed circular DNA (RC-DNA) genome. After budding and infection, the RC-DNA migrates in the nucleus, and is converted into a plasmid-like covalently closed circular DNA (cccDNA). The activity of P protein does not seem to be necessary for cccDNA generation, and is presumably released from (+)DNA by host nuclear DNA repair machinery. This is Protein P from Hepatitis B virus genotype F1 (isolate Argentina/sa11/2000) (HBV-F).